Reading from the N-terminus, the 546-residue chain is 2-isopropylmalate synthase (546 aa).

The 264-residue stretch at 8–271 (ILIFDTTLRD…NSFFKRNPDS (264 aa)) folds into the Pyruvate carboxyltransferase domain. Residues Asp17, His208, His210, and Asn244 each coordinate Mn(2+). The regulatory domain stretch occupies residues 408–546 (QLSLVQVSCG…NNTYISNPAN (139 aa)).

This sequence belongs to the alpha-IPM synthase/homocitrate synthase family. LeuA type 1 subfamily. As to quaternary structure, homodimer. Mn(2+) serves as cofactor.

The protein localises to the cytoplasm. It carries out the reaction 3-methyl-2-oxobutanoate + acetyl-CoA + H2O = (2S)-2-isopropylmalate + CoA + H(+). It participates in amino-acid biosynthesis; L-leucine biosynthesis; L-leucine from 3-methyl-2-oxobutanoate: step 1/4. Its function is as follows. Catalyzes the condensation of the acetyl group of acetyl-CoA with 3-methyl-2-oxobutanoate (2-ketoisovalerate) to form 3-carboxy-3-hydroxy-4-methylpentanoate (2-isopropylmalate). The chain is 2-isopropylmalate synthase from Prochlorococcus marinus (strain MIT 9301).